Here is a 207-residue protein sequence, read N- to C-terminus: Small ribosomal subunit protein uS4 (207 aa).

Positions Lys31 to Asn54 are disordered. The span at Gly42 to Gly53 shows a compositional bias: polar residues. In terms of domain architecture, S4 RNA-binding spans Ser97–Glu158.

It belongs to the universal ribosomal protein uS4 family. Part of the 30S ribosomal subunit. Contacts protein S5. The interaction surface between S4 and S5 is involved in control of translational fidelity.

In terms of biological role, one of the primary rRNA binding proteins, it binds directly to 16S rRNA where it nucleates assembly of the body of the 30S subunit. With S5 and S12 plays an important role in translational accuracy. In Polynucleobacter asymbioticus (strain DSM 18221 / CIP 109841 / QLW-P1DMWA-1) (Polynucleobacter necessarius subsp. asymbioticus), this protein is Small ribosomal subunit protein uS4.